The following is a 331-amino-acid chain: Adenosine deaminase (331 aa).

Positions 12 and 14 each coordinate Zn(2+). Residues His14, Asp16, and Gly170 each coordinate substrate. His197 is a binding site for Zn(2+). Catalysis depends on Glu200, which acts as the Proton donor. Asp278 contacts Zn(2+). Position 279 (Asp279) interacts with substrate.

Belongs to the metallo-dependent hydrolases superfamily. Adenosine and AMP deaminases family. Adenosine deaminase subfamily. Zn(2+) serves as cofactor.

The catalysed reaction is adenosine + H2O + H(+) = inosine + NH4(+). It catalyses the reaction 2'-deoxyadenosine + H2O + H(+) = 2'-deoxyinosine + NH4(+). Functionally, catalyzes the hydrolytic deamination of adenosine and 2-deoxyadenosine. The chain is Adenosine deaminase from Shewanella denitrificans (strain OS217 / ATCC BAA-1090 / DSM 15013).